Reading from the N-terminus, the 946-residue chain is Probable outer membrane protein pmp18 (946 aa).

A signal peptide spans 1-16 (MQNNRSLSKSSFFVGA). The Autotransporter domain maps to 668–946 (QGQIAPTASG…YLHAGTTFKF (279 aa)).

This sequence belongs to the PMP outer membrane protein family.

Its subcellular location is the secreted. It localises to the cell wall. The protein localises to the cell outer membrane. This is Probable outer membrane protein pmp18 (pmp18) from Chlamydia pneumoniae (Chlamydophila pneumoniae).